The following is a 1651-amino-acid chain: MSSFAALNLSTNENADESKDHSRELQVEESSKIFQLALIQLKAKRFDDAKETFDRLFEIDVIKPNKWGLYEYSSPTLDSLRYLAYRNRGILHYQYAKENFKQMESDDVVEHILKTLECLLESLQHGEADNTVTHLLLKIFWSFNSTKLSRTILEYELTRSPEEIRLLSSLSAMFKDQKRVFKQYSQLLKKLHVTSLPQNIPTAVEAVLNCIETCDVEEGQIEPLLKDIKAMKTEDDEILKELDGSNLNLNELSWEELGVSLRSLVPKTKVVNILGRKSDTYSDLEAPIEYVSFTTDEFMEKLSDSSNESPGHSPEHFEDAVSVMPETNNIEVSVEREPSAKRQDSTDRPAQRSSKRFKEREKVQEPDVEQQVEFHTYIINEINQSLHVSGIEKDISIEELDPNNVAKRQELCMSDFYDCLTSWTNKHTEFLKQGQENFSVKGSTDDFTQLTMLLRSSMFSGDVEPTDSLSEIEAEDVRRFIRDVNDKKLHFHAVRFLFIKELLKLREDGTCLVTDYFWSPALYEVVEFFSMAIEVNLYQMIEPSTDESTVSIAVSIFEIMTNMMGNICNDLANKKAQGQKYNELESQRNKLQRKIVRWYEMLLSKPLSTKLKFRFQWSHFSCLQCTTDVTNSTLITTIEDIENSLKEFPDFGTVAYSNYNNISSLSLKTVQSQFSKIKMLRRFTIVDIENEDEDNTHKDYIEHLYCILNQIPCEGTDFQSLLSFVNTSPFLMKLKLWKLLLNYFASRKDQLRFQNCFFSSIKFLLARLSSEEYQIQSQLQRQQTLLSTLTHIGEFSKRFFQVLCDNWDMSLKNPSRDQLQVLVSIFRLLYPLVFYETLTEKNASLKSFFKKAVKSSITIQDIFLTVASLMILCHKFITLEKENAKEEFTGSIIDLISALHMLAGKFEFCDRFDGNFLKVQEKLLCEFSNDSAFTHLKRELWCRYHISIGLDNPEDQHQTHAQPMVKANAIMLSNYFIKFQYQDRNILVLSNNRSNFKQFFETVMELIGDIDYEANHVLSRNEYFFNQYFTAPITLKTIRDAYAGEFEIEFTSPNDDLQSGVDGGLFYVSAVHALNQYKARKKSMQARPSELDAIISTLTTDILYNTKRFESWYLLGKCYSFVVEDDLTWTSDKLASRDKKQATAFAEKKAILCYLMALSLYLSTFKETTSEQMKNDNKIVFRNLLESLGKEMLQAYVKPMSSMSYTWKLKPVLVLKADGSLENLPISYKPSISETNILRCILMILAKADTLYNKDEERNWMNPFYISKVHFKTDRKLFKESGICLLQDSCRLALLQSSVSGSDNILEAHYALVSYCYKCFKDRTFSLAEAISHLREDNGFFGLPEEEWQVEDDKSFFNLIIRLLKYILSKDKQKWQHRPIYRIAQIKYTEFEDTDGAMKEMNKLLALKSVNKNVVNIWKPENELPGKHFVYAYQYVLFYMDLLNEKHDFMAIGGMVKKLRRFGSGMINSQDAINKAVELFVNGAKVKLSLNEKEHGELLMQRIPFPEFVELSEELFNAFKKGDYQSDVLDVFLLAYNLKKGTNSIQFDGVCITIYFKYFYCPFVENKKQSTPYPAPIIEGISGPQPENSPSQQLPQSQSQPQLPRSPSPNTANNKEKTAKTPVKNPTSIRKRVSKRDVFDRVVKLIEKRLS.

Polar residues predominate over residues 1–13; the sequence is MSSFAALNLSTNE. A disordered region spans residues 1-22; sequence MSSFAALNLSTNENADESKDHS. The stretch at 30-63 is one TPR repeat; sequence SSKIFQLALIQLKAKRFDDAKETFDRLFEIDVIK. Over residues 333–365 the composition is skewed to basic and acidic residues; sequence SVEREPSAKRQDSTDRPAQRSSKRFKEREKVQE. Disordered regions lie at residues 333–368 and 1575–1632; these read SVEREPSAKRQDSTDRPAQRSSKRFKEREKVQEPDV and APII…IRKR. Low complexity predominate over residues 1589–1609; sequence SPSQQLPQSQSQPQLPRSPSP.

Belongs to the HIR3 family.

The protein resides in the nucleus. Its function is as follows. Has a role in a nucleosome assembly pathway that is required for the integrity of heterochromatin and proper chromosome segregation. This Kluyveromyces lactis (strain ATCC 8585 / CBS 2359 / DSM 70799 / NBRC 1267 / NRRL Y-1140 / WM37) (Yeast) protein is Histone transcription regulator 3 homolog (HIR3).